The sequence spans 1099 residues: Sterol regulatory element-binding protein 2 (1099 aa).

Residues 1–47 (MDASEFMDTMDPSLSELGDEFTLGDIDEMLQFVSNQVDFPDIFEDQM) are transcriptional activation (acidic). The Cytoplasmic segment spans residues 1 to 461 (MDASEFMDTM…SCVGVMDRSR (461 aa)). Positions 65 to 107 (LTPPHTPVQTSSQTHTQTLTQAHTQTHTQTHTQTRTPPVLQPR) are disordered. A compositionally biased stretch (low complexity) spans 71 to 100 (PVQTSSQTHTQTLTQAHTQTHTQTHTQTRT). The bHLH domain occupies 320–370 (ERRTTHNIIEKRYRSSINDKILELRDLVLGNDAKMHKSGVLRKAIDYIKYL). The leucine-zipper stretch occupies residues 370 to 391 (LQQVNHKLRQENLTLKMANQKN). The chain crosses the membrane as a helical span at residues 462–482 (LLLCALSFLCLSLNPLPSLLG). Over 483-513 (AEAPAGSPEVAGHGPTRTLFSLPAQTQSFGA) the chain is Lumenal. Residues 514–534 (WLWCVLPFLLVWVVSGVGVVW) traverse the membrane as a helical segment. The Cytoplasmic segment spans residues 535–1099 (GCVRVLYLWE…LSGGTTIAAS (565 aa)).

The protein belongs to the SREBP family. Forms a tight complex with scap, the SCAP-SREBP complex, in the endoplasmic reticulum membrane. In terms of assembly, homodimer; efficient DNA binding of the soluble transcription factor fragment requires dimerization with another bHLH protein. Post-translationally, processed in the Golgi apparatus, releasing the protein from the membrane. At low cholesterol the SCAP-SREBP complex is recruited into COPII vesicles for export from the endoplasmic reticulum. In the Golgi, complex SREBPs are cleaved sequentially by site-1 (mbtps1, S1P) and site-2 (mbtps2, S2P) protease. The first cleavage by site-1 protease occurs within the luminal loop, the second cleavage by site-2 protease occurs within the first transmembrane domain, releasing the transcription factor from the Golgi membrane.

It localises to the endoplasmic reticulum membrane. Its subcellular location is the golgi apparatus membrane. It is found in the cytoplasmic vesicle. The protein resides in the COPII-coated vesicle membrane. The protein localises to the nucleus. Functionally, precursor of the transcription factor form (Processed sterol regulatory element-binding protein 2), which is embedded in the endoplasmic reticulum membrane. Low sterol concentrations promote processing of this form, releasing the transcription factor form that translocates into the nucleus and activates transcription of genes involved in cholesterol biosynthesis. Key transcription factor that regulates expression of genes involved in cholesterol biosynthesis. Binds to the sterol regulatory element 1 (SRE-1) (5'-ATCACCCCAC-3'). Has dual sequence specificity binding to both an E-box motif (5'-ATCACGTGA-3') and to SRE-1 (5'-ATCACCCCAC-3'). Regulates transcription of genes related to cholesterol synthesis pathway. Activated by mediated cholesterol efflux, transactivates NOTCH and promotes hematopoietic stem and progenitor cell emergence. This Danio rerio (Zebrafish) protein is Sterol regulatory element-binding protein 2.